A 346-amino-acid chain; its full sequence is 2,5-dichlorohydroquinone reductive dechlorinase (346 aa).

The region spanning 43 to 154 (PRFELFHFVF…YLCDALSGGT (112 aa)) is the GST N-terminal domain. One can recognise a GST C-terminal domain in the interval 189–335 (DRRPESMQAV…AIIQWPGHPP (147 aa)).

This sequence belongs to the GST superfamily.

The enzyme catalyses 2,5-dichlorohydroquinone + 2 glutathione = chlorohydroquinone + glutathione disulfide + chloride + H(+). It catalyses the reaction chlorohydroquinone + 2 glutathione = hydroquinone + glutathione disulfide + chloride + H(+). It functions in the pathway xenobiotic degradation; gamma-hexachlorocyclohexane degradation. Its function is as follows. Catalyzes the degradation of 2,5-dichlorohydroquinone (2,5-DCHQ) into hydroquinone (HQ) via chlorohydroquinone (CHQ). This chain is 2,5-dichlorohydroquinone reductive dechlorinase, found in Sphingobium indicum (strain DSM 16412 / CCM 7286 / MTCC 6364 / B90A).